A 262-amino-acid polypeptide reads, in one-letter code: MIFVLDVGNTNAVLGVFEEGELRQHWRMETDRHKTEDEYGMLVKQLLDHEGLSFEDVKGIIVSSVVPPIMFALERMCEKYFKIKPLVVGPGIKTGLNIKYENPREVGADRIVNAVAGIQLYGSPLIIVDFGTATTYCYINEEKHYMGGVITPGIMISAEALYSRAAKLPRIEITKPSSVVGKNTVSAMQSGILYGYVGQVEGIVKRMKEEAKQEPKVIATGGLAKLISEESNVIDIVDPFLTLKGLYMLYERNANLQQEKGE.

ATP is bound at residue 6 to 13 (DVGNTNAV). Substrate contacts are provided by residues Y100 and 107–110 (GADR). D109 acts as the Proton acceptor in catalysis. D129 is a K(+) binding site. T132 is a binding site for ATP. T184 contacts substrate.

Belongs to the type III pantothenate kinase family. As to quaternary structure, homodimer. NH4(+) is required as a cofactor. K(+) serves as cofactor.

Its subcellular location is the cytoplasm. It catalyses the reaction (R)-pantothenate + ATP = (R)-4'-phosphopantothenate + ADP + H(+). It functions in the pathway cofactor biosynthesis; coenzyme A biosynthesis; CoA from (R)-pantothenate: step 1/5. Catalyzes the phosphorylation of pantothenate (Pan), the first step in CoA biosynthesis. This chain is Type III pantothenate kinase, found in Bacillus cereus (strain G9842).